A 270-amino-acid chain; its full sequence is MSVEQSLLGKETQYPTSYQPDVLFPIARAQSREKYAHIQGITQGKDWWHVFEISWLNAHGIPQVAIGRITLPASSPNLIESKSLKLYFNSLNFTQFDSTQSFIETVEKDLSAAAGAKVELTLFQVDDLETSKPQGICIDDLMPERLEQHPDATLLKLDESGEEIEVELYSHLLRSNCPVTSQPDWGTVFIRFKGKKPCYRSLLAYIISYRQHNGFHEQCVEQIFADIWQNLQPEKLMVYATYTRRGGLDINPCRVSDLTWMPKPIRLARQ.

79–81 (IES) contributes to the substrate binding site. NADPH is bound at residue 81 to 82 (SK). Cysteine 177 serves as the catalytic Thioimide intermediate. The active-site Proton donor is aspartate 184. Residue 216 to 217 (HE) participates in substrate binding. NADPH is bound at residue 245 to 246 (RG).

The protein belongs to the GTP cyclohydrolase I family. QueF type 2 subfamily. In terms of assembly, homodimer.

The protein localises to the cytoplasm. It catalyses the reaction 7-aminomethyl-7-carbaguanine + 2 NADP(+) = 7-cyano-7-deazaguanine + 2 NADPH + 3 H(+). It participates in tRNA modification; tRNA-queuosine biosynthesis. Its function is as follows. Catalyzes the NADPH-dependent reduction of 7-cyano-7-deazaguanine (preQ0) to 7-aminomethyl-7-deazaguanine (preQ1). The polypeptide is NADPH-dependent 7-cyano-7-deazaguanine reductase (Acinetobacter baumannii (strain SDF)).